A 225-amino-acid chain; its full sequence is MEASLSLFRPVATCCRRVALSSSSSSSQKAAAVAGISVRYQSTANRTKRMLNIPPHESFLNVPVEGDRIIFNPPSSEASVYHTPFKFLPRSDPRRRANIYKLFKPPQAPITTPESSSTDAAAADQHGDLPPVLYNPTKSYNVTPEQVEEIRELRAKDPKKYSVTYLSNKYNCTKVFIMMCTQAPREHQEQHKLARARTAENWGPRRAAAKLDARRRKEMLHRGEI.

Positions 106-138 (PQAPITTPESSSTDAAAADQHGDLPPVLYNPTK) are disordered. Positions 109–119 (PITTPESSSTD) are enriched in polar residues.

The protein belongs to the mitochondrion-specific ribosomal protein mL58 family. As to quaternary structure, component of the mitochondrial large ribosomal subunit (mt-LSU). Mature N.crassa 74S mitochondrial ribosomes consist of a small (37S) and a large (54S) subunit. The 37S small subunit contains a 16S ribosomal RNA (16S mt-rRNA) and 32 different proteins. The 54S large subunit contains a 23S rRNA (23S mt-rRNA) and 42 different proteins.

The protein localises to the mitochondrion. In terms of biological role, component of the mitochondrial ribosome (mitoribosome), a dedicated translation machinery responsible for the synthesis of mitochondrial genome-encoded proteins, including at least some of the essential transmembrane subunits of the mitochondrial respiratory chain. The mitoribosomes are attached to the mitochondrial inner membrane and translation products are cotranslationally integrated into the membrane. The chain is Large ribosomal subunit protein mL58 (mrpl20) from Neurospora crassa (strain ATCC 24698 / 74-OR23-1A / CBS 708.71 / DSM 1257 / FGSC 987).